Reading from the N-terminus, the 512-residue chain is Alpha-amylase (512 aa).

Residues 1 to 15 (MKLFVLIALFGLGFA) form the signal peptide. Cystine bridges form between Cys43-Cys101, Cys85-Cys130, and Cys156-Cys175. Positions 115, 173, and 182 each coordinate Ca(2+). Arg210 lines the chloride pocket. The active-site Nucleophile is the Asp212. His216 lines the Ca(2+) pocket. Glu248 acts as the Proton donor in catalysis. Arg352 contributes to the chloride binding site. Cystine bridges form between Cys394-Cys400 and Cys466-Cys478. Asn496 is a glycosylation site (N-linked (GlcNAc...) asparagine).

This sequence belongs to the glycosyl hydrolase 13 family. It depends on Ca(2+) as a cofactor. Chloride serves as cofactor.

The protein resides in the secreted. It catalyses the reaction Endohydrolysis of (1-&gt;4)-alpha-D-glucosidic linkages in polysaccharides containing three or more (1-&gt;4)-alpha-linked D-glucose units.. Its function is as follows. Catalyzes the hydrolysis of alpha-1,4 glycosidic linkages in starch, glycogen and similar oligosaccharides. In Oryzias latipes (Japanese rice fish), this protein is Alpha-amylase.